Consider the following 937-residue polypeptide: MSDIKNITKLQIEDKGKKYSLYSLKKLSQELGKDVTRLPYSIRVLLENQLRNIDGYKVKEDDMHKVLDWDAKASSRPEIPHMPARVVMQDFTGVPAVVDLAAMRKAIKDAGGDADKINPLVDTAMVIDHSVQVDFYGTKTALAQNVAKEFERNGERYSLLKWAQKAFDDFIVVPPGMGIIHQVNLEYLAKDALVKNINGEDVIYPDTLVGTDSHTTMINGVGAVGWGVGGIEAEAVMLGQPYYMVLPDVVGVKFTGKLKTGVTATDLVLKVTEVLRKHGVVGKFVEYYGEGLESLSLPDRATIANMTPEYGATIGFFPVDEVTLDFFNNTNRSELVDAAREMYKEQLLFRENPAEEPEYSNIVEIDLSEVESNLAGPKRPQDRVAFHDMKKAFAEALVHEQGLHGFGLTDEQLQKSAEVKGLNERITHGSVAIAAITSCTNTSNPSLLLGAGLLAKKANEKGLKVKPFVKTSLAPGSQVVTQYLEKANLLPELENLGFNLVGYGCTTCIGNSGPLDEPVVEAINEADLIVASVSSGNRNFEGRINPHIKANYLASPIHVVAYALAGTVDFDPVEDAIGKDAEGNDVYLADIWPTTEEIAAIQSHVINSDMFKKAYATVLDGTEEWQKLKAPEGKLYEFDSSSTYIQCPNFFEKFAEGNDDLDIKGARTLLMLGDSVTTDHISPAGAIPEEYPAGQYLKSHGVEKKDFNSYGSRRGNHEVMMRGTFANIRIRNLLLDNVEGGFTKYHLDGSQQYVFDAAMKYKEKGIPLVILAGKEYGTGSSRDWAAKGTFLLGVKAVIAESYERIHRSNLVGMGVLPLEYVNGQNAKTLGLDGTEMFNIKNLNNIKPRQIVIVEAVHPKTAHTTTFEALARLDADVDVDYLKNGGILQTVLKDIMGDKKESKSTQSTTSKGCGSADTSSETSCPFAKIANFFKKLFK.

3 residues coordinate [4Fe-4S] cluster: Cys-439, Cys-505, and Cys-508. The disordered stretch occupies residues 898–921 (KKESKSTQSTTSKGCGSADTSSET).

This sequence belongs to the aconitase/IPM isomerase family. In terms of assembly, monomer. The cofactor is [4Fe-4S] cluster.

It catalyses the reaction citrate = D-threo-isocitrate. It carries out the reaction (2S,3R)-3-hydroxybutane-1,2,3-tricarboxylate = 2-methyl-cis-aconitate + H2O. It functions in the pathway carbohydrate metabolism; tricarboxylic acid cycle; isocitrate from oxaloacetate: step 2/2. Its pathway is organic acid metabolism; propanoate degradation. In terms of biological role, involved in the catabolism of short chain fatty acids (SCFA) via the tricarboxylic acid (TCA)(acetyl degradation route) and probably the 2-methylcitrate cycle I (propionate degradation route). Catalyzes the reversible isomerization of citrate to isocitrate via cis-aconitate. Could catalyze the hydration of 2-methyl-cis-aconitate to yield (2R,3S)-2-methylisocitrate. The apo form of AcnA functions as a RNA-binding regulatory protein. This Francisella tularensis subsp. holarctica (strain LVS) protein is Aconitate hydratase A (acn).